The primary structure comprises 545 residues: Chaperonin GroEL (545 aa).

Residues 29-32 (TLGP), lysine 50, 86-90 (DGTTT), glycine 413, and aspartate 495 each bind ATP.

This sequence belongs to the chaperonin (HSP60) family. As to quaternary structure, forms a cylinder of 14 subunits composed of two heptameric rings stacked back-to-back. Interacts with the co-chaperonin GroES.

Its subcellular location is the cytoplasm. It carries out the reaction ATP + H2O + a folded polypeptide = ADP + phosphate + an unfolded polypeptide.. Its function is as follows. Together with its co-chaperonin GroES, plays an essential role in assisting protein folding. The GroEL-GroES system forms a nano-cage that allows encapsulation of the non-native substrate proteins and provides a physical environment optimized to promote and accelerate protein folding. The protein is Chaperonin GroEL of Borreliella burgdorferi (strain ATCC 35210 / DSM 4680 / CIP 102532 / B31) (Borrelia burgdorferi).